The sequence spans 134 residues: Profilin-3 (134 aa).

Cysteine 13 and cysteine 118 form a disulfide bridge. An Involved in PIP2 interaction motif is present at residues 84–100 (AVIRGKKGSGGITIKKT). Threonine 114 carries the phosphothreonine modification.

It belongs to the profilin family. In terms of assembly, occurs in many kinds of cells as a complex with monomeric actin in a 1:1 ratio. Post-translationally, phosphorylated by MAP kinases.

Its subcellular location is the cytoplasm. The protein resides in the cytoskeleton. Binds to actin and affects the structure of the cytoskeleton. At high concentrations, profilin prevents the polymerization of actin, whereas it enhances it at low concentrations. The polypeptide is Profilin-3 (Olea europaea (Common olive)).